A 529-amino-acid polypeptide reads, in one-letter code: Pheophorbide a oxygenase, chloroplastic (529 aa).

Disordered stretches follow at residues 1-24 (MPVM…RRVP) and 46-72 (LRVA…TSSA). The transit peptide at 1-47 (MPVMAPTASLLLSPRPLPASRRVPSLPALSASGRLRLRRARADTRLR) directs the protein to the chloroplast. One can recognise a Rieske domain in the interval 82–194 (WYPVSLVEDL…TLVSQGLLFV (113 aa)). Residues cysteine 124, histidine 126, cysteine 144, and histidine 147 each coordinate [2Fe-2S] cluster.

The cofactor is [2Fe-2S] cluster. In terms of tissue distribution, expressed in leaves. Expressed at low levels in roots, stems, panicles and seeds.

It is found in the plastid. Its subcellular location is the chloroplast. The enzyme catalyses pheophorbide a + 2 reduced [2Fe-2S]-[ferredoxin] + O2 + 2 H(+) = red chlorophyll catabolite + 2 oxidized [2Fe-2S]-[ferredoxin]. It participates in porphyrin-containing compound metabolism; chlorophyll degradation. In terms of biological role, catalyzes the key reaction of chlorophyll catabolism, porphyrin macrocycle cleavage of pheophorbide a (pheide a) to a primary fluorescent catabolite (pFCC). Works in a two-step reaction with red chlorophyll catabolite reductase (RCCR). Creates the intermediate RCC through the opening of the porphyrin macrocycle by the introduction of one atom of molecular oxygen at the alpha-methine bridge. Seems to be specific for pheide a. Belongs to the chlorophyll catabolic enzymes (CCEs). May play a role in senescence and response to wounding. In Oryza sativa subsp. japonica (Rice), this protein is Pheophorbide a oxygenase, chloroplastic.